We begin with the raw amino-acid sequence, 189 residues long: UPF0301 protein RMA_0049 (189 aa).

Belongs to the UPF0301 (AlgH) family.

The protein is UPF0301 protein RMA_0049 of Rickettsia massiliae (strain Mtu5).